The chain runs to 1046 residues: Translation initiation factor IF-2 (1046 aa).

Residues 49–448 (EAFPAEGSAP…MGAMVPRGNG (400 aa)) are disordered. The segment covering 52–71 (PAEGSAPSSRPGGRPGNGAR) has biased composition (low complexity). Residues 94–111 (RPGPGGRPVPGRPGPAPL) are compositionally biased toward pro residues. Composition is skewed to low complexity over residues 112 to 139 (PGASRPSTPTAAPQSQPAQTQPPQSQPV) and 147 to 159 (PRPAAAAASAAAP). A compositionally biased stretch (pro residues) spans 160 to 176 (APAPSAPAPAPSAPAPA). Residues 177-187 (PITSAPTAATP) are compositionally biased toward low complexity. The span at 188-206 (PAAPQRPTPGGPRPGPAAP) shows a compositional bias: pro residues. Positions 210-222 (RTGGPGGPGGPGG) are enriched in gly residues. Pro residues predominate over residues 223–235 (GPRPGPRPGPRPA). Residues 244–253 (SPAAGPRAAS) show a composition bias toward low complexity. Composition is skewed to pro residues over residues 260–281 (SAPPRPGAPRPGGPRPGGPRPG) and 304–314 (RPTPGQMPPRP). Residues 320-333 (PRPNSNMFQPRPAG) show a composition bias toward low complexity. Gly residues predominate over residues 334-414 (GAPGRPGGGG…AGAFGPGGRG (81 aa)). Residues 415-426 (RPGRQRKSKRAK) show a composition bias toward basic residues. In terms of domain architecture, tr-type G spans 539 to 711 (ARPPVVTVMG…VILTADASLD (173 aa)). A G1 region spans residues 548–555 (GHVDHGKT). A GTP-binding site is contributed by 548–555 (GHVDHGKT). The tract at residues 573-577 (GITQH) is G2. The G3 stretch occupies residues 598–601 (DTPG). GTP-binding positions include 598 to 602 (DTPGH) and 652 to 655 (NKVD). Positions 652–655 (NKVD) are G4. The interval 688–690 (SAR) is G5.

Belongs to the TRAFAC class translation factor GTPase superfamily. Classic translation factor GTPase family. IF-2 subfamily.

It is found in the cytoplasm. One of the essential components for the initiation of protein synthesis. Protects formylmethionyl-tRNA from spontaneous hydrolysis and promotes its binding to the 30S ribosomal subunits. Also involved in the hydrolysis of GTP during the formation of the 70S ribosomal complex. This is Translation initiation factor IF-2 from Parafrankia sp. (strain EAN1pec).